The chain runs to 439 residues: Agmatine coumaroyltransferase-1 (439 aa).

Catalysis depends on proton acceptor residues His-152 and Asp-385.

It belongs to the plant acyltransferase family. Monomer.

It catalyses the reaction 4-coumaroyl-CoA + agmatine = N-(4-guanidinobutyl)-4-hydroxycinnamamide + CoA + H(+). Inhibited by DEPC. Completely inhibited by ZnSO(4), strongly inhibited by CuSO(4), partially inhibited by MnCl(2). Unaffected by MgCl(2) or CaCl(2). Functionally, involved in the synthesis of hordatines (antifungal hydroxycinnamoylagmatine derivatives). Specific for agmatine as the acyl acceptor, inactive towards tyramine and putrescine. Has activity with the acyl donors 4-coumaroyl-CoA, cinnamoyl-CoA, caffeoyl-CoA, feruloyl-CoA, and to a lesser extent sinapoyl-CoA. In Hordeum vulgare (Barley), this protein is Agmatine coumaroyltransferase-1 (ACT-1).